The primary structure comprises 275 residues: Nurim (275 aa).

Residues 1–4 (MASV) lie on the Nuclear side of the membrane. The chain crosses the membrane as a helical span at residues 5 to 32 (TFRDGFLCVSALITFVFVFVTGADFVRF). The Perinuclear space segment spans residues 33-63 (VSFRAINHNLSGAAPLCRDSVPWSVALRDGV). A helical transmembrane segment spans residues 64–85 (VQKAVAVDVLLLVVFSLQHSLL). The Nuclear portion of the chain corresponds to 86 to 102 (AWTPVKRVCQSVFGVLS). A helical transmembrane segment spans residues 103 to 119 (RSVYCFTTAAALQILMH). At 120–138 (YWRPVTSAPCLWSVSSAPW) the chain is on the perinuclear space side. Residues 139–169 (EIWFPLICFIVHFLCWAIICSILLIFDYPEL) form a helical membrane-spanning segment. Topologically, residues 170–196 (LGIKQVYYECLGLGDPLLLKSERAQRL) are nuclear. The chain crosses the membrane as a helical span at residues 197 to 215 (YSHLRHPVCVELLTVLWLL). The Perinuclear space portion of the chain corresponds to 216–221 (PSFPLD). The helical transmembrane segment at 222 to 239 (RLLLAVFLTVYLILAHSL) threads the bilayer. Over 240–275 (DKQDCAYLRHQLRNKLQLFSTPLEGSEQTNDNNKLE) the chain is Nuclear.

Belongs to the nurim family.

It is found in the nucleus inner membrane. The chain is Nurim (nrm) from Danio rerio (Zebrafish).